Consider the following 132-residue polypeptide: Ribosome-binding factor A (132 aa).

This sequence belongs to the RbfA family. In terms of assembly, monomer. Binds 30S ribosomal subunits, but not 50S ribosomal subunits or 70S ribosomes.

The protein resides in the cytoplasm. Functionally, one of several proteins that assist in the late maturation steps of the functional core of the 30S ribosomal subunit. Associates with free 30S ribosomal subunits (but not with 30S subunits that are part of 70S ribosomes or polysomes). Required for efficient processing of 16S rRNA. May interact with the 5'-terminal helix region of 16S rRNA. This chain is Ribosome-binding factor A, found in Prochlorococcus marinus subsp. pastoris (strain CCMP1986 / NIES-2087 / MED4).